Reading from the N-terminus, the 336-residue chain is Foldase protein PrsA (336 aa).

Residues 1-22 (MKSAKKLLSVLCLGIFILTFTA) form the signal peptide. Residue Cys23 is the site of N-palmitoyl cysteine attachment. Cys23 carries S-diacylglycerol cysteine lipidation. The PpiC domain occupies 194–286 (PNTMNVSHIL…FGYHIIKINS (93 aa)).

It belongs to the PrsA family.

Its subcellular location is the cell membrane. The catalysed reaction is [protein]-peptidylproline (omega=180) = [protein]-peptidylproline (omega=0). In terms of biological role, plays a major role in protein secretion by helping the post-translocational extracellular folding of several secreted proteins. The protein is Foldase protein PrsA of Clostridium botulinum (strain Kyoto / Type A2).